The chain runs to 188 residues: Ion-translocating oxidoreductase complex subunit G (188 aa).

Residues 1 to 9 (MSDSKEITK) lie on the Cytoplasmic side of the membrane. The helical transmembrane segment at 10–30 (VIVTMVVISAVAAALLALTYT) threads the bilayer. At 31–188 (PTQAQLKLLQ…AVDYVSAQEG (158 aa)) the chain is on the extracellular side. Thr166 is subject to FMN phosphoryl threonine.

It belongs to the RnfG family. As to quaternary structure, the Rnf complex is probably composed of eight subunits, including RnfA, RnfB, RnfC, RnfD, RnfE and RnfG. The cofactor is FMN.

It localises to the cell membrane. In terms of biological role, part of a membrane-bound complex that couples electron transfer with translocation of ions across the membrane. Catalyzes Na(+) transport, most probably coupled to electron transfer from reduced ferredoxin to methanophenazine and heterodisulfide reductase. Involved in heterodisulfide reduction during methanogenesis from acetate. This chain is Ion-translocating oxidoreductase complex subunit G, found in Methanosarcina acetivorans (strain ATCC 35395 / DSM 2834 / JCM 12185 / C2A).